A 257-amino-acid chain; its full sequence is Ditrans,polycis-undecaprenyl-diphosphate synthase ((2E,6E)-farnesyl-diphosphate specific) (257 aa).

Residue Asp-24 is part of the active site. Mg(2+) is bound at residue Asp-24. Substrate contacts are provided by residues 25–28 (GNGR), Trp-29, Arg-37, His-41, and 69–71 (SSE). The Proton acceptor role is filled by Asn-72. Substrate is bound by residues Trp-73, Arg-75, Arg-192, and 198 to 200 (RIS). Glu-211 is a binding site for Mg(2+).

It belongs to the UPP synthase family. As to quaternary structure, homodimer. Mg(2+) is required as a cofactor.

It carries out the reaction 8 isopentenyl diphosphate + (2E,6E)-farnesyl diphosphate = di-trans,octa-cis-undecaprenyl diphosphate + 8 diphosphate. Its function is as follows. Catalyzes the sequential condensation of isopentenyl diphosphate (IPP) with (2E,6E)-farnesyl diphosphate (E,E-FPP) to yield (2Z,6Z,10Z,14Z,18Z,22Z,26Z,30Z,34E,38E)-undecaprenyl diphosphate (di-trans,octa-cis-UPP). UPP is the precursor of glycosyl carrier lipid in the biosynthesis of bacterial cell wall polysaccharide components such as peptidoglycan and lipopolysaccharide. In Aliivibrio fischeri (strain ATCC 700601 / ES114) (Vibrio fischeri), this protein is Ditrans,polycis-undecaprenyl-diphosphate synthase ((2E,6E)-farnesyl-diphosphate specific).